Consider the following 240-residue polypeptide: Ribonuclease HII (240 aa).

Residues arginine 31–alanine 222 enclose the RNase H type-2 domain. A divalent metal cation contacts are provided by aspartate 37, glutamate 38, and aspartate 130.

Belongs to the RNase HII family. The cofactor is Mn(2+). Mg(2+) serves as cofactor.

Its subcellular location is the cytoplasm. It catalyses the reaction Endonucleolytic cleavage to 5'-phosphomonoester.. Functionally, endonuclease that specifically degrades the RNA of RNA-DNA hybrids. This chain is Ribonuclease HII, found in Xanthomonas campestris pv. campestris (strain B100).